The following is a 274-amino-acid chain: MAVTKLDVQYLRKMTGAGVMDCRNALREAEGNYDKAVEVIRKKGKVIASKRESREASEGCVLASSKQGFASIVAVKCETDFVAKGEDFVDMVRKILSVTLENKPRTIEDLNDLFIDGRRICEWITERSGISGEKMELGIYEYLEAPYTVAYVHPGNKLAVIVGFNQVIVKTQVARDVAMQIAAMNPISVDKNSIPAKIVEREEKIAREKAIEQGKPEAILDRIVNGALNKYYKEYTLLLQNFVKDPKITIDDYLKGQSRDLTVIEFRRINLNME.

The tract at residues 79 to 82 is involved in Mg(2+) ion dislocation from EF-Tu; that stretch reads TDFV.

It belongs to the EF-Ts family.

It is found in the cytoplasm. Functionally, associates with the EF-Tu.GDP complex and induces the exchange of GDP to GTP. It remains bound to the aminoacyl-tRNA.EF-Tu.GTP complex up to the GTP hydrolysis stage on the ribosome. This Azobacteroides pseudotrichonymphae genomovar. CFP2 protein is Elongation factor Ts.